Reading from the N-terminus, the 418-residue chain is UDP-N-acetylglucosamine 1-carboxyvinyltransferase (418 aa).

Position 22 to 23 (22 to 23 (KN)) interacts with phosphoenolpyruvate. Residue arginine 92 coordinates UDP-N-acetyl-alpha-D-glucosamine. Residue cysteine 116 is the Proton donor of the active site. At cysteine 116 the chain carries 2-(S-cysteinyl)pyruvic acid O-phosphothioketal. UDP-N-acetyl-alpha-D-glucosamine is bound by residues 121–125 (RPVDL), aspartate 305, and isoleucine 327.

This sequence belongs to the EPSP synthase family. MurA subfamily.

It is found in the cytoplasm. It carries out the reaction phosphoenolpyruvate + UDP-N-acetyl-alpha-D-glucosamine = UDP-N-acetyl-3-O-(1-carboxyvinyl)-alpha-D-glucosamine + phosphate. It participates in cell wall biogenesis; peptidoglycan biosynthesis. Cell wall formation. Adds enolpyruvyl to UDP-N-acetylglucosamine. This is UDP-N-acetylglucosamine 1-carboxyvinyltransferase from Acidiphilium cryptum (strain JF-5).